The chain runs to 617 residues: tRNA-dihydrouridine(47) synthase [NAD(P)(+)] (617 aa).

The C3H1-type zinc finger occupies 42-70 (KENNALCPAISIGNECPYKENCKFPHDVE). The disordered stretch occupies residues 160–193 (EEKPDPSSKVSNIPEENRDATSAISEGKETESVS). Residues 245–247 (PLT) and Q308 contribute to the FMN site. The active-site Proton donor is C340. FMN-binding positions include K380, H411, 460–462 (NGD), and 483–484 (AR).

Belongs to the Dus family. Dus3 subfamily. FMN serves as cofactor.

The protein localises to the cytoplasm. Its subcellular location is the nucleus. It catalyses the reaction 5,6-dihydrouridine(47) in tRNA + NAD(+) = uridine(47) in tRNA + NADH + H(+). The catalysed reaction is 5,6-dihydrouridine(47) in tRNA + NADP(+) = uridine(47) in tRNA + NADPH + H(+). It carries out the reaction a 5,6-dihydrouridine in mRNA + NAD(+) = a uridine in mRNA + NADH + H(+). The enzyme catalyses a 5,6-dihydrouridine in mRNA + NADP(+) = a uridine in mRNA + NADPH + H(+). In terms of biological role, catalyzes the synthesis of dihydrouridine, a modified base, in various RNAs, such as tRNAs and mRNAs. Modifies the uridine in position 47 (U47) in the D-loop of tRNAs. Also able to mediate formation of dihydrouridine outside of the D-loop of tRNAs. Catalyzes the synthesis of dihydrouridine in some mRNAs, thereby affecting their translation. Dus3-mediated dihydrouridylation of the mRNA encoding alpha-tubulin nda2 is required for meiotic chromosome segregation. In Schizosaccharomyces pombe (strain 972 / ATCC 24843) (Fission yeast), this protein is tRNA-dihydrouridine(47) synthase [NAD(P)(+)].